Reading from the N-terminus, the 238-residue chain is MRALLALCLLLGWLRWGPAGAQQSGEYCHGWVDVQGNYHEGFQCPEDFDTLDATICCGSCALRYCCAAADARLEQGGCTNDRRELEHPGITAQPVYVPFLIVGSIFIAFIILGSVVAIYCCTCLRPKEPSQQPIRFSLRSYQTETLPMILTSTSPRAPSRQSSTATSSSSTGGSIRRFSFARAEPGCLVPSPPPPYTTSHSIHLAQPSGFLVSPQYFAYPLQQEPPLPGKSCPDFSSS.

A signal peptide spans M1–A21. At Q22 to P98 the chain is on the lumenal side. The helical transmembrane segment at F99–Y119 threads the bilayer. At C120–S238 the chain is on the cytoplasmic side. The segment at T151–G173 is disordered. Positions S159–G173 are enriched in low complexity.

The protein belongs to the shisa family.

The protein localises to the endoplasmic reticulum membrane. In terms of biological role, plays an essential role in the maturation of presomitic mesoderm cells by individual attenuation of both FGF and WNT signaling. This chain is Protein shisa-3 homolog (SHISA3), found in Homo sapiens (Human).